The chain runs to 205 residues: Outer-membrane lipoprotein LolB (205 aa).

The first 17 residues, 1-17 (MFLRHCITFTLIALLAG), serve as a signal peptide directing secretion. Cysteine 18 is lipidated: N-palmitoyl cysteine. Cysteine 18 carries the S-diacylglycerol cysteine lipid modification.

It belongs to the LolB family. Monomer.

The protein localises to the cell outer membrane. In terms of biological role, plays a critical role in the incorporation of lipoproteins in the outer membrane after they are released by the LolA protein. This is Outer-membrane lipoprotein LolB from Pseudomonas putida (strain W619).